The primary structure comprises 420 residues: Glutamyl-tRNA reductase (420 aa).

Residues 49–52 (TCNR), S110, 115–117 (EHQ), and Q121 each bind substrate. C50 (nucleophile) is an active-site residue. 190 to 195 (GSGTIN) lines the NADP(+) pocket.

Belongs to the glutamyl-tRNA reductase family. In terms of assembly, homodimer.

It catalyses the reaction (S)-4-amino-5-oxopentanoate + tRNA(Glu) + NADP(+) = L-glutamyl-tRNA(Glu) + NADPH + H(+). Its pathway is porphyrin-containing compound metabolism; protoporphyrin-IX biosynthesis; 5-aminolevulinate from L-glutamyl-tRNA(Glu): step 1/2. Catalyzes the NADPH-dependent reduction of glutamyl-tRNA(Glu) to glutamate 1-semialdehyde (GSA). The sequence is that of Glutamyl-tRNA reductase from Wigglesworthia glossinidia brevipalpis.